The primary structure comprises 355 residues: Erythronate-4-phosphate dehydrogenase (355 aa).

Residues Ser-45 and Thr-66 each contribute to the substrate site. Asp-146 contributes to the NAD(+) binding site. Residue Arg-206 is part of the active site. Asp-229 is a binding site for NAD(+). Glu-234 is a catalytic residue. His-251 functions as the Proton donor in the catalytic mechanism. Gly-254 contacts NAD(+). Tyr-255 contacts substrate.

Belongs to the D-isomer specific 2-hydroxyacid dehydrogenase family. PdxB subfamily. As to quaternary structure, homodimer.

The protein localises to the cytoplasm. It catalyses the reaction 4-phospho-D-erythronate + NAD(+) = (R)-3-hydroxy-2-oxo-4-phosphooxybutanoate + NADH + H(+). It participates in cofactor biosynthesis; pyridoxine 5'-phosphate biosynthesis; pyridoxine 5'-phosphate from D-erythrose 4-phosphate: step 2/5. Catalyzes the oxidation of erythronate-4-phosphate to 3-hydroxy-2-oxo-4-phosphonooxybutanoate. This chain is Erythronate-4-phosphate dehydrogenase, found in Acinetobacter baumannii (strain AB307-0294).